Reading from the N-terminus, the 524-residue chain is Metalloendopeptidase OMA1, mitochondrial (524 aa).

Residues 1–13 (MSFICGLQSAARN) constitute a mitochondrion transit peptide. Positions 14 to 143 (HVFFRFNSLS…RNFHTSPRFQ (130 aa)) are excised as a propeptide. The Mitochondrial matrix portion of the chain corresponds to 144–195 (AAPVPLLLMILKPVQKLFAIIVGRGIRKWWQALPPNKKEVVKENIRKNKWKL). The interval 148-167 (PLLLMILKPVQKLFAIIVGR) is cardiolipin-binding. Residues 165–195 (VGRGIRKWWQALPPNKKEVVKENIRKNKWKL) are stress-sensor region. The helical transmembrane segment at 196-216 (FLGLSSFGLLFVVFYFTHLEV) threads the bilayer. Residue His327 coordinates Zn(2+). Glu328 is an active-site residue. Positions 331 and 392 each coordinate Zn(2+). A disulfide bridge links Cys407 with Cys465.

This sequence belongs to the peptidase M48 family. In terms of assembly, homooligomer. The cofactor is Zn(2+). In terms of processing, may form a redox-dependent disulfide bond. Exists in a semi-oxidized state and is activated by prolonged hypoxia. Post-translationally, autocatalytically cleaved in response to mitochondrial depolarization both at the N-terminus and C-terminus to generate the short active form (S-OMA1). Autocatalytic processing at the C-terminus takes place at residues 447-456. The S-OMA1 form is unstable. OMA1 pre-processing by AFG3L2 may participate in maturation before OMA1 autocatalytic cleavage. Degraded by YMEL1 in response to membrane depolarization. Protein turnover is regulated by prohibitin (PHB and PHB2), which promotes degradation of OMA1 in a cardiolipin-binding manner. In terms of tissue distribution, widely expressed, with strong expression in the heart, skeletal muscle, kidney and liver.

The protein localises to the mitochondrion inner membrane. Protease activity is activated upon autocatalytic cleavage in response to mitochondrial depolarization. Functionally, metalloprotease that is part of the quality control system in the inner membrane of mitochondria. Activated in response to various mitochondrial stress, leading to the proteolytic cleavage of target proteins, such as OPA1, UQCC3 and DELE1. Involved in the fusion of the mitochondrial inner membranes by mediating cleavage of OPA1 at S1 position, generating the soluble OPA1 (S-OPA1), which cooperates with the membrane form (L-OPA1) to coordinate the fusion of mitochondrial inner membranes. Following stress conditions that induce loss of mitochondrial membrane potential, mediates cleavage of OPA1, leading to excess production of soluble OPA1 (S-OPA1) and negative regulation of mitochondrial fusion. Involved in mitochondrial safeguard in response to transient mitochondrial membrane depolarization (flickering) by catalyzing cleavage of OPA1, leading to excess production of S-OPA1, preventing mitochondrial hyperfusion. Also acts as a regulator of apoptosis: upon BAK and BAX aggregation, mediates cleavage of OPA1, leading to the remodeling of mitochondrial cristae and allowing the release of cytochrome c from mitochondrial cristae. In depolarized mitochondria, may also act as a backup protease for PINK1 by mediating PINK1 cleavage and promoting its subsequent degradation by the proteasome. May also cleave UQCC3 in response to mitochondrial depolarization. Also acts as an activator of the integrated stress response (ISR): in response to mitochondrial stress, mediates cleavage of DELE1 to generate the processed form of DELE1 (S-DELE1), which translocates to the cytosol and activates EIF2AK1/HRI to trigger the ISR. Its role in mitochondrial quality control is essential for regulating lipid metabolism as well as to maintain body temperature and energy expenditure under cold-stress conditions. Binds cardiolipin, possibly regulating its protein turnover. Required for the stability of the respiratory supercomplexes. The chain is Metalloendopeptidase OMA1, mitochondrial from Homo sapiens (Human).